Reading from the N-terminus, the 303-residue chain is MPEESSPRRTPQSIPYQDLPHLVNADGQYLFCRYWKPTGTPKALIFVSHGAGEHSGRYEELARMLMGLDLLVFAHDHVGHGQSEGERMVVSDFHVFVRDVLQHVDSMQKDYPGLPVFLLGHSMGGAIAILTAAERPGHFAGMVLISPLVLANPESATTFKVLAAKVLNLVLPNLSLGPIDSSVLSRNKTEVDIYNSDPLICRAGLKVCFGIQLLNAVSRVERALPKLTVPFLLLQGSADRLCDSKGAYLLMELAKSQDKTLKIYEGAYHVLHKELPEVTNSVFHEINMWVSQRTATAGTASPP.

A Phosphothreonine modification is found at Thr10. At Tyr58 the chain carries 3'-nitrotyrosine. Catalysis depends on Ser122, which acts as the Nucleophile. Active-site charge relay system residues include Asp239 and His269.

This sequence belongs to the AB hydrolase superfamily. Monoacylglycerol lipase family. As to quaternary structure, homodimer. Detected in adipose tissue, lung, liver, kidney, brain and heart.

Its subcellular location is the cytoplasm. The protein resides in the cytosol. It localises to the membrane. It catalyses the reaction Hydrolyzes glycerol monoesters of long-chain fatty acids.. The enzyme catalyses a 1-acylglycerol + H2O = glycerol + a fatty acid + H(+). The catalysed reaction is a 2-acylglycerol + H2O = glycerol + a fatty acid + H(+). It carries out the reaction 1-octanoylglycerol + H2O = octanoate + glycerol + H(+). It catalyses the reaction 2-(5Z,8Z,11Z,14Z-eicosatetraenoyl)-glycerol + H2O = glycerol + (5Z,8Z,11Z,14Z)-eicosatetraenoate + H(+). The enzyme catalyses 1-decanoylglycerol + H2O = decanoate + glycerol + H(+). The catalysed reaction is 1-dodecanoylglycerol + H2O = dodecanoate + glycerol + H(+). It carries out the reaction 1-tetradecanoylglycerol + H2O = tetradecanoate + glycerol + H(+). It catalyses the reaction 2-hexadecanoylglycerol + H2O = glycerol + hexadecanoate + H(+). The enzyme catalyses 1-(9Z-octadecenoyl)-glycerol + H2O = glycerol + (9Z)-octadecenoate + H(+). The catalysed reaction is 2-(9Z-octadecenoyl)-glycerol + H2O = glycerol + (9Z)-octadecenoate + H(+). It carries out the reaction 2-(9Z,12Z-octadecadienoyl)-glycerol + H2O = (9Z,12Z)-octadecadienoate + glycerol + H(+). It catalyses the reaction 1-(5Z,8Z,11Z,14Z-eicosatetraenoyl)-glycerol + H2O = glycerol + (5Z,8Z,11Z,14Z)-eicosatetraenoate + H(+). The enzyme catalyses 1-(9Z,12Z-octadecadienoyl)-glycerol + H2O = (9Z,12Z)-octadecadienoate + glycerol + H(+). The catalysed reaction is 1-hexadecanoylglycerol + H2O = glycerol + hexadecanoate + H(+). It carries out the reaction 1-octadecanoylglycerol + H2O = octadecanoate + glycerol + H(+). It catalyses the reaction prostaglandin E2 1-glyceryl ester + H2O = prostaglandin E2 + glycerol + H(+). The enzyme catalyses prostaglandin D2-1-glycerol ester + H2O = prostaglandin D2 + glycerol + H(+). The catalysed reaction is 2-glyceryl-15-deoxy-Delta(12,14)-prostaglandin J2 + H2O = 15-deoxy-Delta(12,14)-prostaglandin J2 + glycerol + H(+). It carries out the reaction prostaglandin F2alpha 1-glyceryl ester + H2O = prostaglandin F2alpha + glycerol + H(+). It functions in the pathway glycerolipid metabolism; triacylglycerol degradation. Converts monoacylglycerides to free fatty acids and glycerol. Hydrolyzes the endocannabinoid 2-arachidonoylglycerol, and thereby contributes to the regulation of endocannabinoid signaling, nociperception and perception of pain. Regulates the levels of fatty acids that serve as signaling molecules and promote cancer cell migration, invasion and tumor growth. The protein is Monoglyceride lipase of Homo sapiens (Human).